The following is a 457-amino-acid chain: MPHNSIRSGHGGLNQLGGAFVNGRPLPEVVRQRIVDLAHQGVRPCDISRQLRVSHGCVSKILGRYYETGSIRPGVIGGSKPKVATPKVVEKIGDYKRQNPTMFAWEIRDRLLAEGVCDNDTVPSVSSINRIIRTKVQQPFNLPMDSCVATKSLSPGHTLIPSSAVTPPESPQSDSLGSTYSINGLLGIAQPGNDNKRKMDDSDQDSCRLSIDSQSSSSGPRKHLRTDTFSQHHLEALECPFERQHYPEAYASPSHTKGEQGLYPLPLLNSALDDGKATLTSSNTPLGRNLSTHQTYPVVADPHSPFAIKQETPELSSSSSTPSSLSSSAFLDLQQVGSGGPAGASVPPFNAFPHAASVYGQFTGQALLSGREMVGPTLPGYPPHIPTSGQGSYASSAIAGMVAGSEYSGNAYSHTPYSSYSEAWRFPNSSLLSSPYYYSSTSRPSAPPTSATAFDHL.

A DNA-binding region (paired) is located at residues 9 to 135 (GHGGLNQLGG…SSINRIIRTK (127 aa)). The tract at residues 12-68 (GLNQLGGAFVNGRPLPEVVRQRIVDLAHQGVRPCDISRQLRVSHGCVSKILGRYYET) is PAI subdomain. The RED subdomain stretch occupies residues 87–135 (KVVEKIGDYKRQNPTMFAWEIRDRLLAEGVCDNDTVPSVSSINRIIRTK). Residues 159-182 (LIPSSAVTPPESPQSDSLGSTYSI) are compositionally biased toward polar residues. Residues 159 to 224 (LIPSSAVTPP…SSSSGPRKHL (66 aa)) form a disordered region. Position 304 is a phosphoserine (serine 304).

As to quaternary structure, interacts with WWTR1. In terms of tissue distribution, expressed in the developing excretory system and the thyroid gland.

The protein resides in the nucleus. In terms of biological role, thought to encode a transcription factor. It may have a role in kidney cell differentiation. May play a regulatory role in mammalian development. This Mus musculus (Mouse) protein is Paired box protein Pax-8 (Pax8).